Reading from the N-terminus, the 326-residue chain is tRNA-dihydrouridine(20/20a) synthase (326 aa).

FMN contacts are provided by residues Pro-11–Leu-13 and Gln-63. The Proton donor role is filled by Cys-93. Residues Lys-132, His-165, Asn-205–Gly-207, and Gly-227–Arg-228 each bind FMN.

This sequence belongs to the Dus family. DusA subfamily. Requires FMN as cofactor.

The enzyme catalyses 5,6-dihydrouridine(20) in tRNA + NADP(+) = uridine(20) in tRNA + NADPH + H(+). It carries out the reaction 5,6-dihydrouridine(20) in tRNA + NAD(+) = uridine(20) in tRNA + NADH + H(+). It catalyses the reaction 5,6-dihydrouridine(20a) in tRNA + NADP(+) = uridine(20a) in tRNA + NADPH + H(+). The catalysed reaction is 5,6-dihydrouridine(20a) in tRNA + NAD(+) = uridine(20a) in tRNA + NADH + H(+). In terms of biological role, catalyzes the synthesis of 5,6-dihydrouridine (D), a modified base found in the D-loop of most tRNAs, via the reduction of the C5-C6 double bond in target uridines. Specifically modifies U20 and U20a in tRNAs. The sequence is that of tRNA-dihydrouridine(20/20a) synthase from Vibrio vulnificus (strain CMCP6).